The primary structure comprises 214 residues: Phosphoenolpyruvate guanylyltransferase 2 (214 aa).

Residues threonine 135, glycine 150, and serine 153 each contribute to the phosphoenolpyruvate site.

It belongs to the CofC family.

It catalyses the reaction phosphoenolpyruvate + GTP + H(+) = enolpyruvoyl-2-diphospho-5'-guanosine + diphosphate. Its pathway is cofactor biosynthesis; coenzyme F420 biosynthesis. In terms of biological role, guanylyltransferase that catalyzes the activation of phosphoenolpyruvate (PEP) as enolpyruvoyl-2-diphospho-5'-guanosine, via the condensation of PEP with GTP. It is involved in the biosynthesis of coenzyme F420, a hydride carrier cofactor. The sequence is that of Phosphoenolpyruvate guanylyltransferase 2 from Rhodococcus jostii (strain RHA1).